The sequence spans 308 residues: Ribonuclease Z (308 aa).

The Zn(2+) site is built by His60, His62, Asp64, His65, His140, Asp209, and His269. The active-site Proton acceptor is the Asp64.

The protein belongs to the RNase Z family. As to quaternary structure, homodimer. The cofactor is Zn(2+).

The enzyme catalyses Endonucleolytic cleavage of RNA, removing extra 3' nucleotides from tRNA precursor, generating 3' termini of tRNAs. A 3'-hydroxy group is left at the tRNA terminus and a 5'-phosphoryl group is left at the trailer molecule.. In terms of biological role, zinc phosphodiesterase, which displays some tRNA 3'-processing endonuclease activity. Probably involved in tRNA maturation, by removing a 3'-trailer from precursor tRNA. The sequence is that of Ribonuclease Z from Methanococcus maripaludis (strain C6 / ATCC BAA-1332).